A 629-amino-acid polypeptide reads, in one-letter code: Dolichyl-diphosphooligosaccharide--protein glycosyltransferase subunit 2 (629 aa).

Residues 1-22 (MAPPGSRTVLLLALTIIARTQA) form the signal peptide. Residues 23–541 (LKPTHYLTKH…RDPEKRPPTV (519 aa)) are Lumenal-facing. N106 is a glycosylation site (N-linked (GlcNAc...) asparagine). A Glycyl lysine isopeptide (Lys-Gly) (interchain with G-Cter in ubiquitin) cross-link involves residue K154. Residues 542-562 (VSNTFTGLILSPLLLLFALWI) traverse the membrane as a helical segment. The Cytoplasmic portion of the chain corresponds to 563 to 570 (RIGAKISN). A helical transmembrane segment spans residues 571–591 (FTFGLTIIFHLGHAMLAMYVY). Residues 592-594 (WTQ) are Lumenal-facing. A helical membrane pass occupies residues 595–615 (LNMFQTLKYLAILGSVTFLAG). The Cytoplasmic segment spans residues 616 to 629 (NRMLAQQAIKRTAH).

Belongs to the SWP1 family. Component of the oligosaccharyltransferase (OST) complex. OST exists in two different complex forms which contain common core subunits RPN1, RPN2, OST48, OST4, DAD1 and TMEM258, either STT3A or STT3B as catalytic subunits, and form-specific accessory subunits. STT3A complex assembly occurs through the formation of 3 subcomplexes. Subcomplex 1 contains RPN1 and TMEM258, subcomplex 2 contains the STT3A-specific subunits STT3A, DC2/OSTC, and KCP2 as well as the core subunit OST4, and subcomplex 3 contains RPN2, DAD1, and OST48. The STT3A complex can form stable complexes with the Sec61 complex or with both the Sec61 and TRAP complexes. Interacts with DDI2. Interacts with TMEM35A/NACHO.

It localises to the endoplasmic reticulum. Its subcellular location is the endoplasmic reticulum membrane. It participates in protein modification; protein glycosylation. In terms of biological role, subunit of the oligosaccharyl transferase (OST) complex that catalyzes the initial transfer of a defined glycan (Glc(3)Man(9)GlcNAc(2) in eukaryotes) from the lipid carrier dolichol-pyrophosphate to an asparagine residue within an Asn-X-Ser/Thr consensus motif in nascent polypeptide chains, the first step in protein N-glycosylation. N-glycosylation occurs cotranslationally and the complex associates with the Sec61 complex at the channel-forming translocon complex that mediates protein translocation across the endoplasmic reticulum (ER). All subunits are required for a maximal enzyme activity. In Sus scrofa (Pig), this protein is Dolichyl-diphosphooligosaccharide--protein glycosyltransferase subunit 2.